The sequence spans 501 residues: 2,3-bisphosphoglycerate-independent phosphoglycerate mutase (501 aa).

Residues aspartate 12 and serine 62 each coordinate Mn(2+). The active-site Phosphoserine intermediate is serine 62. Substrate contacts are provided by residues histidine 121, 150–151 (RD), arginine 182, arginine 188, 253–256 (RSDR), and lysine 322. Mn(2+) is bound by residues aspartate 389, histidine 393, aspartate 430, histidine 431, and histidine 449.

It belongs to the BPG-independent phosphoglycerate mutase family. Monomer. Mn(2+) is required as a cofactor.

It catalyses the reaction (2R)-2-phosphoglycerate = (2R)-3-phosphoglycerate. It participates in carbohydrate degradation; glycolysis; pyruvate from D-glyceraldehyde 3-phosphate: step 3/5. Its function is as follows. Catalyzes the interconversion of 2-phosphoglycerate and 3-phosphoglycerate. The chain is 2,3-bisphosphoglycerate-independent phosphoglycerate mutase from Ehrlichia ruminantium (strain Welgevonden).